A 210-amino-acid polypeptide reads, in one-letter code: Large ribosomal subunit protein bL25 (210 aa).

Belongs to the bacterial ribosomal protein bL25 family. CTC subfamily. In terms of assembly, part of the 50S ribosomal subunit; part of the 5S rRNA/L5/L18/L25 subcomplex. Contacts the 5S rRNA. Binds to the 5S rRNA independently of L5 and L18.

Its function is as follows. This is one of the proteins that binds to the 5S RNA in the ribosome where it forms part of the central protuberance. The protein is Large ribosomal subunit protein bL25 of Frankia casuarinae (strain DSM 45818 / CECT 9043 / HFP020203 / CcI3).